A 43-amino-acid chain; its full sequence is Protein PsbN (43 aa).

Residues 5 to 27 (TLVAIFISGSLVSFTGYALYTAF) form a helical membrane-spanning segment.

The protein belongs to the PsbN family.

The protein resides in the plastid. The protein localises to the chloroplast thylakoid membrane. Functionally, may play a role in photosystem I and II biogenesis. This Nelumbo lutea (American lotus) protein is Protein PsbN.